The following is a 125-amino-acid chain: Large ribosomal subunit protein bL12 (125 aa).

The protein belongs to the bacterial ribosomal protein bL12 family. In terms of assembly, homodimer. Part of the ribosomal stalk of the 50S ribosomal subunit. Forms a multimeric L10(L12)X complex, where L10 forms an elongated spine to which 2 to 4 L12 dimers bind in a sequential fashion. Binds GTP-bound translation factors.

Forms part of the ribosomal stalk which helps the ribosome interact with GTP-bound translation factors. Is thus essential for accurate translation. This is Large ribosomal subunit protein bL12 from Bradyrhizobium sp. (strain BTAi1 / ATCC BAA-1182).